Reading from the N-terminus, the 209-residue chain is Large ribosomal subunit protein uL3 (209 aa).

Residues 128–166 (FGGGSRTHGQSDRLRAPGSVGGSSDPSRTFKGTRMAGRM) are disordered.

This sequence belongs to the universal ribosomal protein uL3 family. As to quaternary structure, part of the 50S ribosomal subunit. Forms a cluster with proteins L14 and L19.

One of the primary rRNA binding proteins, it binds directly near the 3'-end of the 23S rRNA, where it nucleates assembly of the 50S subunit. This Chlorobaculum parvum (strain DSM 263 / NCIMB 8327) (Chlorobium vibrioforme subsp. thiosulfatophilum) protein is Large ribosomal subunit protein uL3.